A 379-amino-acid chain; its full sequence is Demethylspheroidene O-methyltransferase (379 aa).

Residues aspartate 235 and arginine 279 each coordinate S-adenosyl-L-methionine.

The protein belongs to the class I-like SAM-binding methyltransferase superfamily. Cation-independent O-methyltransferase family.

The catalysed reaction is demethylspheroidene + S-adenosyl-L-methionine = spheroidene + S-adenosyl-L-homocysteine + H(+). Its pathway is carotenoid biosynthesis; spheroidene biosynthesis. Methyltransferase that mediates the O-methylation of 1-hydroxy carotenoids. Converts hydroxyneurosporene to methoxyneurosporene or demethylspheroidene to spheroidene. Also able to produce spirilloxanthin. This chain is Demethylspheroidene O-methyltransferase (crtF), found in Cereibacter sphaeroides (strain ATCC 17023 / DSM 158 / JCM 6121 / CCUG 31486 / LMG 2827 / NBRC 12203 / NCIMB 8253 / ATH 2.4.1.) (Rhodobacter sphaeroides).